Consider the following 294-residue polypeptide: NAD kinase (294 aa).

The active-site Proton acceptor is the D74. Residues 74 to 75 (DG), R79, 149 to 150 (NE), D179, 190 to 195 (TGYSMS), and A214 each bind NAD(+).

The protein belongs to the NAD kinase family. Requires a divalent metal cation as cofactor.

It localises to the cytoplasm. It catalyses the reaction NAD(+) + ATP = ADP + NADP(+) + H(+). In terms of biological role, involved in the regulation of the intracellular balance of NAD and NADP, and is a key enzyme in the biosynthesis of NADP. Catalyzes specifically the phosphorylation on 2'-hydroxyl of the adenosine moiety of NAD to yield NADP. The sequence is that of NAD kinase from Flavobacterium psychrophilum (strain ATCC 49511 / DSM 21280 / CIP 103535 / JIP02/86).